The chain runs to 184 residues: Shikimate kinase (184 aa).

18–23 is an ATP binding site; that stretch reads GAGKTT. T22 contacts Mg(2+). Substrate-binding residues include D40, R64, and G86. Position 124 (R124) interacts with ATP. A substrate-binding site is contributed by R143. Position 160 (Q160) interacts with ATP.

This sequence belongs to the shikimate kinase family. As to quaternary structure, monomer. The cofactor is Mg(2+).

The protein localises to the cytoplasm. The catalysed reaction is shikimate + ATP = 3-phosphoshikimate + ADP + H(+). Its pathway is metabolic intermediate biosynthesis; chorismate biosynthesis; chorismate from D-erythrose 4-phosphate and phosphoenolpyruvate: step 5/7. In terms of biological role, catalyzes the specific phosphorylation of the 3-hydroxyl group of shikimic acid using ATP as a cosubstrate. The sequence is that of Shikimate kinase from Chromobacterium violaceum (strain ATCC 12472 / DSM 30191 / JCM 1249 / CCUG 213 / NBRC 12614 / NCIMB 9131 / NCTC 9757 / MK).